The sequence spans 352 residues: UPF0324 membrane protein RA0957 (352 aa).

10 helical membrane-spanning segments follow: residues 24–43 (VVSY…SAQF), 48–67 (YGAP…NFLS), 104–126 (LGVS…AIIV), 136–158 (LSLL…LNAV), 169–191 (LALT…PVLA), 201–223 (SGVF…FAMS), 235–257 (IVRV…VLGA), 272–294 (GFVL…AAAG), 301–318 (SRWL…KTSV), and 328–350 (HVTL…LLWY).

It belongs to the UPF0324 family.

The protein resides in the cell membrane. The chain is UPF0324 membrane protein RA0957 from Rhizobium meliloti (strain 1021) (Ensifer meliloti).